We begin with the raw amino-acid sequence, 413 residues long: MPRYCAASYCKNRGGQSARDQRKLSFYPFPLHDKERLEKWLRNMKRDAWTPSKHQLLCSDHFTPDSLDVRWGIRYLKHTAVPTIFSSPDDEEKGSSQNSPQEIRREDQEETTKNVESKKVPVSLELCTPKKSSVTAENPDKKAEVICSTVLSKSLQVQKLQLENREDFEADSIILDNSSQQHIHQPEPVLMAAAVQNVEATDVHASVEVPVSCTATVLQFSDPDYLNSSLKLKNTLGSITDYTLENPNSHVVGCSVEVQPATENAVLVNAVTQTIEQLSGSEESVIAIIVPAESPKEPEIINRSFLPIKQEFLDTEEAETDNSLHMNAYNGLEILQTEHSYCKQDIDREHLWQKISKLHSKITLLEMQEVKTLGRLRSLEALIGQLKQENLLSEEKLKIVENCFTTLEVTMIQ.

A THAP-type zinc finger spans residues 1-85 (MPRYCAASYC…LKHTAVPTIF (85 aa)). The disordered stretch occupies residues 84–118 (IFSSPDDEEKGSSQNSPQEIRREDQEETTKNVESK). The segment covering 102–118 (EIRREDQEETTKNVESK) has biased composition (basic and acidic residues). Residues 375–399 (RLRSLEALIGQLKQENLLSEEKLKI) are a coiled coil.

The protein localises to the nucleus. This is THAP domain-containing protein 5 (THAP5) from Gallus gallus (Chicken).